Here is a 482-residue protein sequence, read N- to C-terminus: AYADDLILFANDHRAANRLLKVATEFFRERGLALNATKSAALSVGVVPGKKQLYTHTKNLFYVGGKAIPQLTPDDYFKYLGSRYNFSGQVRPSVELLKTQLARVQSAPLKPAQKLTMIRDHVVARFLSCLQSVRVTLKALKDADRLVRLSVRKVLHLNKSSPDAYIHAPIREGGLGIISLRAHIPAIMRSRLFKIATTADPLTATVLQIPAVEKFYQTLLRWTEGNGGSTTNIRKEWGRKLQESYSGNGLRQGNTSGVSGDWLRNPPNFWSGADYIDAVRLRGNLLPTRGIPSNPPHERKCRAGCNKTESLSHVLQGCPLTHWHPIRRHDRVAGRLRQIAEKKGWMVEEEMRLRLADGSLRKPDLVMAQGDTIVVCDVTIVWEGPNPLTMAYHQKVAYYSQQPVLDAIHDRFPGRSVVVLALVLGARGTWCDQNNAITDTLSLSRAQNSLINNCINGSIIVHREFMRTSFTRATGGRGRGDI.

Residues 1 to 84 enclose the Reverse transcriptase domain; the sequence is AYADDLILFA…DYFKYLGSRY (84 aa). The nucleic acid-binding endonuclease stretch occupies residues 208 to 482; the sequence is QIPAVEKFYQ…ATGGRGRGDI (275 aa).

The enzyme catalyses DNA(n) + a 2'-deoxyribonucleoside 5'-triphosphate = DNA(n+1) + diphosphate. This is Retrovirus-related Pol polyprotein from type-1 retrotransposable element R2 from Popillia japonica (Japanese beetle).